Consider the following 134-residue polypeptide: Pre-histone-like nucleoprotein (134 aa).

A propeptide spanning residues Ala-2–Gly-23 is cleaved from the precursor. A disordered region spans residues Arg-40–Pro-62. The short motif at Lys-125 to Gln-134 is the Nuclear localization signal element.

Belongs to the adenoviridae histone-like nucleoprotein family. As to quaternary structure, interacts with the core-capsid bridging protein; this interaction bridges the virus core to the capsid. Interacts with host NPM1; this interaction might play a role in placing the pre-histone-like nucleoprotein on the viral DNA or regulating viral gene expression. Interacts with host HMGB1; this interaction inhibits host immune response. In terms of processing, cleaved near the N-terminus by the viral protease during virion maturation to form the mature protein.

It is found in the virion. It localises to the host nucleus. The protein localises to the host nucleolus. Its function is as follows. Plays a role in the inhibition of host immune response within the nucleus. Interacts with cellular nucleosomes and immobilizes the host immune danger signal HMGB1 on chromatin. In turn, prevents HMGB1 release out of the cell and thus decreases inflammation. Also plays a role in the wrapping and condensation of the viral DNA. May also promote viral genome import into the nucleus. The protein is Pre-histone-like nucleoprotein of Canis lupus familiaris (Dog).